We begin with the raw amino-acid sequence, 61 residues long: UPF0370 protein SG1720 (61 aa).

A helical transmembrane segment spans residues 3 to 23 (WLADYWWVVLLVLAGMLIGGV). Residues 37–47 (NRPELPPHRDN) are compositionally biased toward basic and acidic residues. Positions 37–61 (NRPELPPHRDNNAQWDEEDDWPKKP) are disordered. A compositionally biased stretch (acidic residues) spans 51–61 (WDEEDDWPKKP).

This sequence belongs to the UPF0370 family.

The protein resides in the cell membrane. The polypeptide is UPF0370 protein SG1720 (Sodalis glossinidius (strain morsitans)).